We begin with the raw amino-acid sequence, 276 residues long: Dermonecrotic toxin LarSicTox-alphaIB2c (276 aa).

Residue histidine 5 is part of the active site. Residues glutamate 25 and aspartate 27 each contribute to the Mg(2+) site. The active-site Nucleophile is histidine 41. 2 cysteine pairs are disulfide-bonded: cysteine 45–cysteine 51 and cysteine 47–cysteine 190. Aspartate 85 is a binding site for Mg(2+). Asparagine 253 carries N-linked (GlcNAc...) asparagine glycosylation.

It belongs to the arthropod phospholipase D family. Class II subfamily. The cofactor is Mg(2+). In terms of tissue distribution, expressed by the venom gland.

It is found in the secreted. It carries out the reaction an N-(acyl)-sphingosylphosphocholine = an N-(acyl)-sphingosyl-1,3-cyclic phosphate + choline. The catalysed reaction is an N-(acyl)-sphingosylphosphoethanolamine = an N-(acyl)-sphingosyl-1,3-cyclic phosphate + ethanolamine. The enzyme catalyses a 1-acyl-sn-glycero-3-phosphocholine = a 1-acyl-sn-glycero-2,3-cyclic phosphate + choline. It catalyses the reaction a 1-acyl-sn-glycero-3-phosphoethanolamine = a 1-acyl-sn-glycero-2,3-cyclic phosphate + ethanolamine. Its function is as follows. Dermonecrotic toxins cleave the phosphodiester linkage between the phosphate and headgroup of certain phospholipids (sphingolipid and lysolipid substrates), forming an alcohol (often choline) and a cyclic phosphate. This toxin acts on sphingomyelin (SM). It may also act on ceramide phosphoethanolamine (CPE), lysophosphatidylcholine (LPC) and lysophosphatidylethanolamine (LPE), but not on lysophosphatidylserine (LPS), and lysophosphatidylglycerol (LPG). It acts by transphosphatidylation, releasing exclusively cyclic phosphate products as second products. Induces dermonecrosis, hemolysis, increased vascular permeability, edema, inflammatory response, and platelet aggregation. In Loxosceles arizonica (Arizona brown spider), this protein is Dermonecrotic toxin LarSicTox-alphaIB2c.